The following is a 556-amino-acid chain: MDIKRSILLVALAVVAYLMVLQWNQDYGQAALPTETAQSQPAAPALPDSPSATTEGNANDVPAVAGQQQASALPTSAPSSQLIRVRTDVLDLAIDPRGGDIVELHLPQYPRRQDRPDVPFQLFERSSERTYEAQSGLIGDGPDKASGRPQYSSEKTEYQLAEGQDALVVDLNYSADGVNYIKRFTLERGNYALKVNYLIDNQSQQPWTGYLFGQLKRDKSGDPSSSTATGTATYLGAALWTKDEPYRKVSMSNMDDKNLRETVQGGWIAWLQHYFVTAWIPQAGDTNQVQTRKDSQGNYIIGFTGPAVTVPAGAQGETGATLYAGPKSQDKLEELSPGLRLTVDYGILWFIAQPIFWLLQNIHALLGNWGWSIIVLTIVIKLAFFPLSAASYRSMARMRAVSPKMQALKEQFGDDRQKMSQAMMELYKKEKINPLGGCLPILVQMPVFLALYWVLLESVEMRQAPWMFWITDLSIKDPYFILPIIMGVTMFIQQQLNPTPPDPMQARVMKLLPIIFTFFFLWFPAGLVLYWVVNNILSIAQQWYITRQIEAGAKPA.

Residues 7–27 (ILLVALAVVAYLMVLQWNQDY) form a helical membrane-spanning segment. Disordered regions lie at residues 35 to 59 (ETAQ…GNAN) and 126 to 152 (SSER…PQYS). The span at 36 to 54 (TAQSQPAAPALPDSPSATT) shows a compositional bias: low complexity. 4 helical membrane-spanning segments follow: residues 365–385 (LLGN…LAFF), 435–455 (LGGC…YWVL), 468–488 (FWIT…IMGV), and 513–533 (PIIF…YWVV).

The protein belongs to the OXA1/ALB3/YidC family. Type 1 subfamily. In terms of assembly, interacts with the Sec translocase complex via SecD. Specifically interacts with transmembrane segments of nascent integral membrane proteins during membrane integration.

It is found in the cell inner membrane. Required for the insertion and/or proper folding and/or complex formation of integral membrane proteins into the membrane. Involved in integration of membrane proteins that insert both dependently and independently of the Sec translocase complex, as well as at least some lipoproteins. Aids folding of multispanning membrane proteins. The sequence is that of Membrane protein insertase YidC from Stutzerimonas stutzeri (strain A1501) (Pseudomonas stutzeri).